We begin with the raw amino-acid sequence, 392 residues long: ADP-ribosylhydrolase ARH1 (392 aa).

Residues S79, D80, and D81 each contribute to the Mg(2+) site. K109 is a substrate binding site. Positions 125-127 are substrate; the sequence is IQT. G159 contacts substrate. Substrate stretches follow at residues 192–194, 309–311, and 315–316; these read HNN, FSG, and SS. Mg(2+) is bound by residues D348, D350, and S351.

This sequence belongs to the ADP-ribosylglycohydrolase family. Monomer. Requires Mg(2+) as cofactor.

It catalyses the reaction N(omega)-(ADP-D-ribosyl)-L-arginyl-[protein] + H2O = ADP-D-ribose + L-arginyl-[protein]. Specifically acts as an arginine mono-ADP-ribosylhydrolase by mediating the removal of mono-ADP-ribose attached to arginine residues on proteins. This chain is ADP-ribosylhydrolase ARH1 (adprh), found in Dictyostelium discoideum (Social amoeba).